The primary structure comprises 408 residues: GTPase HflX (408 aa).

One can recognise a Hflx-type G domain in the interval 198-361 (PRVSLVGYTN…LIVREMERHY (164 aa)). Residues 204–211 (GYTNAGKS), 229–233 (FVTLD), 251–254 (DTVG), 317–320 (NKAD), and 339–341 (SAK) contribute to the GTP site. Mg(2+) contacts are provided by S211 and T231.

This sequence belongs to the TRAFAC class OBG-HflX-like GTPase superfamily. HflX GTPase family. As to quaternary structure, monomer. Associates with the 50S ribosomal subunit. It depends on Mg(2+) as a cofactor.

It localises to the cytoplasm. Functionally, GTPase that associates with the 50S ribosomal subunit and may have a role during protein synthesis or ribosome biogenesis. In Spirochaeta thermophila (strain ATCC 49972 / DSM 6192 / RI 19.B1), this protein is GTPase HflX.